We begin with the raw amino-acid sequence, 644 residues long: Threonine--tRNA ligase (644 aa).

The TGS domain maps to 1–61 (MNVTIEGQVF…ADTTTIEPVF (61 aa)). The tract at residues 241 to 532 (DHRKLGQQLD…LTEHFAGAFP (292 aa)) is catalytic. Zn(2+)-binding residues include C333, H384, and H509.

It belongs to the class-II aminoacyl-tRNA synthetase family. In terms of assembly, homodimer. Zn(2+) is required as a cofactor.

Its subcellular location is the cytoplasm. It carries out the reaction tRNA(Thr) + L-threonine + ATP = L-threonyl-tRNA(Thr) + AMP + diphosphate + H(+). Its function is as follows. Catalyzes the attachment of threonine to tRNA(Thr) in a two-step reaction: L-threonine is first activated by ATP to form Thr-AMP and then transferred to the acceptor end of tRNA(Thr). Also edits incorrectly charged L-seryl-tRNA(Thr). In Nitratidesulfovibrio vulgaris (strain DSM 19637 / Miyazaki F) (Desulfovibrio vulgaris), this protein is Threonine--tRNA ligase.